Reading from the N-terminus, the 153-residue chain is Heavy metal-associated isoprenylated plant protein 25 (153 aa).

The HMA domain occupies Leu-24–Glu-88. Cys-35 and Cys-38 together coordinate a metal cation. The residue at position 150 (Cys-150) is a Cysteine methyl ester. Cys-150 carries the S-farnesyl cysteine lipid modification. The propeptide at Val-151–Met-153 is removed in mature form.

This sequence belongs to the HIPP family. In terms of tissue distribution, expressed in roots, shoot apical meristem, trichomes and flower buds.

The protein resides in the membrane. Heavy-metal-binding protein. Binds cadmium. May be involved in cadmium transport and play a role in cadmium detoxification. This Arabidopsis thaliana (Mouse-ear cress) protein is Heavy metal-associated isoprenylated plant protein 25.